The primary structure comprises 261 residues: Phosphoribosylaminoimidazole-succinocarboxamide synthase (261 aa).

This sequence belongs to the SAICAR synthetase family.

It catalyses the reaction 5-amino-1-(5-phospho-D-ribosyl)imidazole-4-carboxylate + L-aspartate + ATP = (2S)-2-[5-amino-1-(5-phospho-beta-D-ribosyl)imidazole-4-carboxamido]succinate + ADP + phosphate + 2 H(+). The protein operates within purine metabolism; IMP biosynthesis via de novo pathway; 5-amino-1-(5-phospho-D-ribosyl)imidazole-4-carboxamide from 5-amino-1-(5-phospho-D-ribosyl)imidazole-4-carboxylate: step 1/2. The chain is Phosphoribosylaminoimidazole-succinocarboxamide synthase from Novosphingobium aromaticivorans (strain ATCC 700278 / DSM 12444 / CCUG 56034 / CIP 105152 / NBRC 16084 / F199).